The primary structure comprises 534 residues: Bifunctional purine biosynthesis protein PurH (534 aa).

Positions 6–151 (TRLPIRRALI…KNHKDVAIVV (146 aa)) constitute an MGS-like domain.

Belongs to the PurH family.

The enzyme catalyses (6R)-10-formyltetrahydrofolate + 5-amino-1-(5-phospho-beta-D-ribosyl)imidazole-4-carboxamide = 5-formamido-1-(5-phospho-D-ribosyl)imidazole-4-carboxamide + (6S)-5,6,7,8-tetrahydrofolate. It catalyses the reaction IMP + H2O = 5-formamido-1-(5-phospho-D-ribosyl)imidazole-4-carboxamide. It participates in purine metabolism; IMP biosynthesis via de novo pathway; 5-formamido-1-(5-phospho-D-ribosyl)imidazole-4-carboxamide from 5-amino-1-(5-phospho-D-ribosyl)imidazole-4-carboxamide (10-formyl THF route): step 1/1. Its pathway is purine metabolism; IMP biosynthesis via de novo pathway; IMP from 5-formamido-1-(5-phospho-D-ribosyl)imidazole-4-carboxamide: step 1/1. The sequence is that of Bifunctional purine biosynthesis protein PurH from Pseudomonas syringae pv. tomato (strain ATCC BAA-871 / DC3000).